Consider the following 109-residue polypeptide: Spermidine export protein MdtI (109 aa).

The next 4 helical transmembrane spans lie at 6–26, 36–56, 64–84, and 88–108; these read WVHA…NVFL, IFGL…SQAV, AYAL…WILF, and LNRK…MVKL.

It belongs to the drug/metabolite transporter (DMT) superfamily. Small multidrug resistance (SMR) (TC 2.A.7.1) family. MdtI subfamily. In terms of assembly, forms a complex with MdtJ.

It localises to the cell inner membrane. Its function is as follows. Catalyzes the excretion of spermidine. The chain is Spermidine export protein MdtI from Shigella dysenteriae serotype 1 (strain Sd197).